A 142-amino-acid chain; its full sequence is Large ribosomal subunit protein uL11 (142 aa).

As to quaternary structure, part of the ribosomal stalk of the 50S ribosomal subunit. Interacts with L10 and the large rRNA to form the base of the stalk. L10 forms an elongated spine to which L12 dimers bind in a sequential fashion forming a multimeric L10(L12)X complex. Post-translationally, lys-40 is trimethylated or acetylated; other modifications may also exist.

Functionally, forms part of the ribosomal stalk which helps the ribosome interact with GTP-bound translation factors. The chain is Large ribosomal subunit protein uL11 from Rhodopseudomonas palustris (strain ATCC BAA-98 / CGA009).